Here is a 484-residue protein sequence, read N- to C-terminus: MADDESRTILLEKNEDCPGCIIDRTKQQQRGVPYLHLSFIWLVSLCTALPISSLFPYIYFMIRDFHIAKQEEDIGFYAGFVGSSFMIGRALTSIFWGKLADRYGRKPIILIGTFSVIIFNTLFGLSTSFWLAISVRFLLGCFNCLLGVIRAYASEVVSEEYNALSLSVVSTSRGIGLILGPAIGGYLAQPAEKYPNIFSQSSVFGRFPYFLPSLVISVYATAVLIACWWLPETLHTRCRIAQGRLNPTELNDDESRGGGLDEQKIINKPSLLRNRPLMAIIIVYCVFSLQEIAYNEIFSLWAVSDRSYGGLSFSSQDVGEVLAISGLGLLVFQLLVYPPLEKSVGLLAVIRLSAVLLIPLLSCYPYIALLSGVTLHLVINCASIIKNALSISLVTGLFIMLNKAVPQNQRGAANGISMTAMSVFKSFGPAGGGVLFSWAQKRQDATFLPGQIFAPCDEMVFLVLNLVQLVGLILTFIPYISQIQ.

12 helical membrane-spanning segments follow: residues 39 to 59, 76 to 96, 107 to 127, 129 to 149, 168 to 188, 210 to 230, 278 to 298, 318 to 338, 355 to 375, 381 to 401, 416 to 436, and 460 to 480; these read FIWLVSLCTALPISSLFPYIY, FYAGFVGSSFMIGRALTSIFW, PIILIGTFSVIIFNTLFGLST, FWLAISVRFLLGCFNCLLGVI, VVSTSRGIGLILGPAIGGYLA, FLPSLVISVYATAVLIACWWL, MAIIIVYCVFSLQEIAYNEIF, VGEVLAISGLGLLVFQLLVYP, VLLIPLLSCYPYIALLSGVTL, CASIIKNALSISLVTGLFIML, ISMTAMSVFKSFGPAGGGVLF, and VFLVLNLVQLVGLILTFIPYI.

The protein belongs to the major facilitator superfamily.

It localises to the membrane. This is Probable peptide/nitrate transporter At3g43790 (ZIFL2) from Arabidopsis thaliana (Mouse-ear cress).